A 613-amino-acid chain; its full sequence is MFDIQEELKKLPDKSGVYIMKDANGVVIYVGKAVVLKNRVRQYFQQSANHPPKVQAMVSKVSEFEYIVVDSEVEALMLECTLIKKYKPKYNILLKDDKHYPYIKVTLNEEYPRILKTRRVEKDGARYFGPYSSGFAVNDTIDTLKKLFSLKTCNKNLPRDIGKTRPCLNYHMKQCLAPCQGGVNRDEYREMMKKICRFLGGQYDEIINDLRIQMETAAEQLDFEKAAQLRNKITSIKQLSESQKVLFTDLEDRDIIGYSADSTDLCIQVFFVRNGRVIGREHFIFEGEANEDKGYSLSTFIKQFYTKVQYVPSEIVLQSEVDDSETIAKWLTEKRGFKVALRVPQRGDLVKLVHMVSENAEITLKLHRERQSREGTVHSEGMAQLVKLLGLEEAPARIESYDISNTGSSEIVASMVVFENGRPARQEYRKFKMKSIEQQNDYGSMQETLFRRLNRAKREKEEGTENAKFSKLPDLILVDGGSNHVNAARQVVEELGYNFKIAGMAKDDRHRTKSLVYMGNEYELATNMPLLRFITEIQDETHRVAVEYNRKLREKRYVRSELDEIEGIGQTRKKALIKHFKSVAAIRKADIAQLQEVNGISEKIAKNIYEYFN.

In terms of domain architecture, GIY-YIG spans 13–92; sequence DKSGVYIMKD…IKKYKPKYNI (80 aa). The UVR domain occupies 204-239; that stretch reads DEIINDLRIQMETAAEQLDFEKAAQLRNKITSIKQL.

The protein belongs to the UvrC family. Interacts with UvrB in an incision complex.

It is found in the cytoplasm. Functionally, the UvrABC repair system catalyzes the recognition and processing of DNA lesions. UvrC both incises the 5' and 3' sides of the lesion. The N-terminal half is responsible for the 3' incision and the C-terminal half is responsible for the 5' incision. This is UvrABC system protein C from Ruminiclostridium cellulolyticum (strain ATCC 35319 / DSM 5812 / JCM 6584 / H10) (Clostridium cellulolyticum).